The primary structure comprises 475 residues: TOM1-like protein 1 (475 aa).

Residues 22-154 (ATFAGVQTED…DLLKKGVQFP (133 aa)) form the VHS domain. The tract at residues 155-175 (PLDGEPETKQEAGQISPSRPT) is disordered. Over residues 165 to 175 (EAGQISPSRPT) the composition is skewed to polar residues. Residue serine 170 is modified to Phosphoserine. The GAT domain occupies 199–287 (EQIGKLHSEL…AILGYERFTR (89 aa)). A disordered region spans residues 296–317 (KRNPTEANQTSSEPSAPSCDLL). Residues 300–310 (TEANQTSSEPS) show a composition bias toward polar residues. Serine 313 carries the post-translational modification Phosphoserine. The segment at 392 to 395 (YDNF) is interaction with GRB2. The SH3-binding signature appears at 421–425 (LPPLP). The interaction with PIK3R1 stretch occupies residues 442–445 (YEVM). Tyrosine 458 carries the phosphotyrosine modification. The SH2-binding signature appears at 458–461 (YEEI).

It belongs to the TOM1 family. Interacts with the SH2 and SH3 domains of FYN when phosphorylated. Also interacts with GRB2 and PIK3R1 when phosphorylated. Interacts with LYN. Post-translationally, phosphorylated on tyrosines by FYN and LYN.

The protein resides in the golgi apparatus. It is found in the golgi stack. It localises to the endosome membrane. Its subcellular location is the cytoplasm. The protein localises to the membrane. In terms of biological role, probable adapter protein involved in signaling pathways. Interacts with the SH2 and SH3 domains of various signaling proteins when it is phosphorylated. May promote FYN activation, possibly by disrupting intramolecular SH3-dependent interactions. This Rattus norvegicus (Rat) protein is TOM1-like protein 1 (Tom1l1).